Here is a 157-residue protein sequence, read N- to C-terminus: uncharacterized protein (157 aa).

This is an uncharacterized protein from Caenorhabditis elegans.